A 215-amino-acid polypeptide reads, in one-letter code: MKINTVLFDLDGTLINTNELIISSFLHTLNHYYSNQYKREDVLPFIGPSLHDTFSKIDASKVEEMITCYRQFNHEHHDELVEEYETVYETVQELKKQGYKIGIVTTKARQTVEMGLKLSKLDQFFDVVVTIDDVEHVKPHPEPLQKALELLDAKPEETLMVGDNHHDIVGGQNAGTKTVAVSWTLKGRAYLEAYKPDYVLDKMSDLLPILSRING.

The active-site Nucleophile is aspartate 9.

Belongs to the HAD-like hydrolase superfamily. PpaX family. Requires Mg(2+) as cofactor.

It catalyses the reaction diphosphate + H2O = 2 phosphate + H(+). In terms of biological role, hydrolyzes pyrophosphate formed during P-Ser-HPr dephosphorylation by HPrK/P. Might play a role in controlling the intracellular pyrophosphate pool. The sequence is that of Pyrophosphatase PpaX from Bacillus mycoides (strain KBAB4) (Bacillus weihenstephanensis).